Reading from the N-terminus, the 255-residue chain is MTADIRLFTCLTDNFGVLIHDPATGATAAIDAPEAEPVIQALDREGWVLTDILITHHHSDHVGGVAELKRKYACRVVAPHDRSAEIANVDLRVGQGDIIKVGTLLGRVLETPGHTLDHVSYVFDDEKVVFAADTLFSIGCGRVFEGTYPMMWDSLLKLRALPDSFRLYCGHEYTDSNIKFALTIEPNNPVLKARAEEVTRLRAEGRPTVPTLMGEEKKANVFLRADDPAVAAGVHMKGASGVEVFAELRERKNKS.

Zn(2+)-binding residues include His-56, His-58, Asp-60, His-61, His-114, Asp-133, and His-171.

The protein belongs to the metallo-beta-lactamase superfamily. Glyoxalase II family. In terms of assembly, monomer. Requires Zn(2+) as cofactor.

The enzyme catalyses an S-(2-hydroxyacyl)glutathione + H2O = a 2-hydroxy carboxylate + glutathione + H(+). It participates in secondary metabolite metabolism; methylglyoxal degradation; (R)-lactate from methylglyoxal: step 2/2. Functionally, thiolesterase that catalyzes the hydrolysis of S-D-lactoyl-glutathione to form glutathione and D-lactic acid. The chain is Hydroxyacylglutathione hydrolase from Nitrobacter winogradskyi (strain ATCC 25391 / DSM 10237 / CIP 104748 / NCIMB 11846 / Nb-255).